The chain runs to 377 residues: Hydrogenase maturation factor HypD (377 aa).

Residues Cys41, Cys69, and Cys72 each coordinate Fe cation.

It belongs to the HypD family. [4Fe-4S] cluster is required as a cofactor.

It participates in protein modification; [NiFe] hydrogenase maturation. Its function is as follows. Involved in the maturation of [NiFe] hydrogenases. Involved in the biosynthesis of the Fe(CN)(2)CO cofactor. In Rhodobacter capsulatus (Rhodopseudomonas capsulata), this protein is Hydrogenase maturation factor HypD.